The sequence spans 297 residues: MPSYALLGATGATGSSVLRHLLYSGSSSDLTVNVLVRSKSKLLAAFPSLDKPRPSVTSSIPTIRIFEGDSTNPDVLCAVLQDASLVFMCVAQNGSPMGTTLVQNTAAALIEARRRQAQPRGELTVIQLRSASLNPVLAVQVPRFVHRVVCFCLAAGYADLRRACVLYEAAATEGLLQYVLVDPPTLHDARGTQTTGYRLIDTTDMKDKENQRQAICLSYADLGVAMCEIASRADELHGQGVGVTATGPVRQTWAVLAGFLLEGGLGHLDYRYGRENVVVLGVCILLLLGGLLYSIKA.

Residues 277 to 297 form a helical membrane-spanning segment; it reads VVVLGVCILLLLGGLLYSIKA.

It belongs to the avfA family.

The protein resides in the membrane. It functions in the pathway mycotoxin biosynthesis; sterigmatocystin biosynthesis. Its function is as follows. Averufin oxidase; part of the gene cluster that mediates the biosynthesis of sterigmatocystin (ST), a polyketide-derived furanocoumarin which is part of the most toxic and carcinogenic compounds among the known mycotoxins. The first step in the biosynthesis of sterigmatocystin is the production of hexanoate by the fatty acid synthase (FAS) units stcJ and stcK. The polyketide backbone is assembled by the non-reducing polyketide synthase stcA by condensation of the starter hexanoyl-CoA and 7 malonyl-CoA extender units followed by cyclization and release of norsolorinic acid. Norsolorinic acid is the first stable intermediate in the biosynthesis of sterigmatocystin and is converted into averantin (AVN) by the ketoreductase stcE which reduces the hexanoate ketone to an alcohol. Averantin is then oxidized into 5'-hydroxyaverantin (HAVN) by the cytochrome P450 monooxygenase stcF. 5'-hydroxyaverantin is further converted to 5'-oxyaverantin (OAVN) by the 5'-hydroxyaverantin dehydrogenase stcG. The next step is the conversion of OAVN into averufin (AVF) which is catalyzed by a yet to be identified enzyme. The cytochrome P450 monooxygenase stcB and the flavin-binding monooxygenase stcW are both required for the conversion of averufin to 1-hydroxyversicolorone. The esterase stcI probably catalyzes the formation of versiconal hemiacetal acetate from 1-hydroxyversicolorone. The oxydoreductase stcN then probably catalyzes the biosynthetic step from versiconal to versicolorin B (VERB). The next step is performed by the versicolorin B desaturase stcL to produce versicolorin A (VERA). The ketoreductase stcU and the cytochrome P450 monooxygenase stcS are involved in the conversion of versicolorin A to demethylsterigmatocystin. The Baeyer-Villiger oxidas stcQ and the reductase stcR might be involved in the biosynthetic step from versicolorin A to demethylsterigmatocystin. The final step in the biosynthesis of sterigmatocystin is the methylation of demethylsterigmatocystin catalyzed by the methyltransferase stcP. The protein is Averufin oxidase stcO of Emericella nidulans (strain FGSC A4 / ATCC 38163 / CBS 112.46 / NRRL 194 / M139) (Aspergillus nidulans).